The primary structure comprises 207 residues: Ribonuclease HII (207 aa).

The RNase H type-2 domain occupies 19–207; that stretch reads HCIAGVDEVG…PVKKALGIEE (189 aa). Residues Asp25, Glu26, and Asp117 each contribute to the a divalent metal cation site.

It belongs to the RNase HII family. Mn(2+) serves as cofactor. It depends on Mg(2+) as a cofactor.

It is found in the cytoplasm. The catalysed reaction is Endonucleolytic cleavage to 5'-phosphomonoester.. In terms of biological role, endonuclease that specifically degrades the RNA of RNA-DNA hybrids. This chain is Ribonuclease HII, found in Vibrio vulnificus (strain CMCP6).